A 182-amino-acid polypeptide reads, in one-letter code: Autophagy-related protein 31 (182 aa).

Residues 105-134 (LTSGNDTGGDAGKKSGDISDPAAGPDVPRE) form a disordered region.

Its subcellular location is the cytoplasm. It is found in the cytoskeleton. The protein resides in the preautophagosomal structure. Plays a role in starvation-induced autophagy. Involved in mitophagy. Functions with ATG17 and ATG29 at the preautophagosomal structure (PAS) in order to form normal autophagosomes under starvation conditions. May be involved in microtubule function, such as chromosome segregation and karyogamy. The chain is Autophagy-related protein 31 (CIS1) from Candida glabrata (strain ATCC 2001 / BCRC 20586 / JCM 3761 / NBRC 0622 / NRRL Y-65 / CBS 138) (Yeast).